The following is a 317-amino-acid chain: Transcriptional regulator LsrR (317 aa).

The segment at residues 33-56 (QSEISDRLGLTRLKVSRLLEKGHQ) is a DNA-binding region (H-T-H motif).

Belongs to the SorC transcriptional regulatory family.

The protein localises to the cytoplasm. Inactivated by phosphorylated autoinducer-2 (phospho-AI-2). Phospho-AI-2 acts by binding to LsrR, which is then unable to bind to the promoter regions, allowing the transcription of the target genes. Its function is as follows. Transcriptional regulator that represses the expression of the lsr operon in the absence of the quorum-sensing signaling molecule autoinducer 2 (AI-2). It also represses the expression of the lsrRK operon. Acts by binding directly to the lsrA and lsrR promoter regions. In the presence of phosphorylated autoinducer-2 (phospho-AI-2), LsrR is inactivated, leading to the transcription of the genes. This chain is Transcriptional regulator LsrR (lsrR), found in Escherichia coli O157:H7.